The chain runs to 328 residues: 7,8-didemethyl-8-hydroxy-5-deazariboflavin synthase (328 aa).

The Radical SAM core domain occupies 1 to 242; the sequence is MTYSRNIFIP…PDVSIQVPPN (242 aa). Residues cysteine 15, cysteine 19, and cysteine 22 each contribute to the [4Fe-4S] cluster site.

Belongs to the radical SAM superfamily. CofG family. Consists of two subunits, CofG and CofH. Requires [4Fe-4S] cluster as cofactor.

It catalyses the reaction 5-amino-5-(4-hydroxybenzyl)-6-(D-ribitylimino)-5,6-dihydrouracil + S-adenosyl-L-methionine = 7,8-didemethyl-8-hydroxy-5-deazariboflavin + 5'-deoxyadenosine + L-methionine + NH4(+) + H(+). It participates in cofactor biosynthesis; coenzyme F0 biosynthesis. In terms of biological role, catalyzes the radical-mediated synthesis of 7,8-didemethyl-8-hydroxy-5-deazariboflavin from 5-amino-5-(4-hydroxybenzyl)-6-(D-ribitylimino)-5,6-dihydrouracil. The polypeptide is 7,8-didemethyl-8-hydroxy-5-deazariboflavin synthase (Methanothermobacter thermautotrophicus (strain ATCC 29096 / DSM 1053 / JCM 10044 / NBRC 100330 / Delta H) (Methanobacterium thermoautotrophicum)).